The sequence spans 461 residues: Tubulin gamma-2 chain (461 aa).

142-148 (AGGTGSG) contributes to the GTP binding site.

This sequence belongs to the tubulin family.

It is found in the cytoplasm. Its subcellular location is the cytoskeleton. The protein localises to the microtubule organizing center. The protein resides in the centrosome. Its function is as follows. Tubulin is the major constituent of microtubules. The gamma chain is found at microtubule organizing centers (MTOC) such as the spindle poles or the centrosome, suggesting that it is involved in the minus-end nucleation of microtubule assembly. This is Tubulin gamma-2 chain from Euplotoides octocarinatus (Freshwater ciliate).